Reading from the N-terminus, the 1100-residue chain is MSYYQRPFSPSAYSLPASLNSSIVMQHGTSLDSTDTYPQHAQSLDGTTSSSIPLYRSSEEEKRVTVIKAPHYPGIGPVDESGIPTAIRTTVDRPKDWYKTMFKQIHMVHKPDDDTDMYNTPYTYNAGLYNPPYSAQSHPAAKTQTYRPLSKSHSDNSPNAFKDASSPVPPPHVPPPVPPLRPRDRSSTEKHDWDPPDRKVDTRKFRSEPRSIFEYEPGKSSILQHERPASLYQSSIDRSLERPMSSASMASDFRKRRKSEPAVGPPRGLGDQSASRTSPGRVDLPGSSTTLTKSFTSSSPSSPSRAKGGDDSKICPSLCSYSGLNGNPSSELDYCSTYRQHLDVPRDSPRAISFKNGWQMARQNAEIWSSTEETVSPKIKSRSCDDLLNDDCDSFPDPKVKSESMGSLLCEEDSKESCPMAWGSPYVPEVRSNGRSRIRHRSARNAPGFLKMYKKMHRINRKDLMNSEVICSVKSRILQYESEQQHKDLLRAWSQCSTEEVPRDMVPTRISEFEKLIQKSKSMPNLGDDMLSPVTLEPPQNGLCPKRRFSIEYLLEEENQSGPPARGRRGCQSNALVPIHIEVTSDEQPRAHVEFSDSDQDGVVSDHSDYIHLEGSSFCSESDFDHFSFTSSESFYGSSHHHHHHHHHHHRHLISSCKGRCPASYTRFTTMLKHERARHENTEEPRRQEMDPGLSKLAFLVSPVPFRRKKNSAPKKQTEKAKCKASVFEALDSALKDICDQIKAEKKRGSLPDNSILHRLISELLPDVPERNSSLRALRRSPLHQPLHPLPPDGAIHCPPYQNDCGRMPRSASFQDVDTANSSCHHQDRGGALQDRESPRSYSSTLTDMGRSAPRERRGTPEKEKLPAKAVYDFKAQTSKELSFKKGDTVYILRKIDQNWYEGEHHGRVGIFPISYVEKLTPPEKAQPARPPPPAQPGEIGEAIAKYNFNADTNVELSLRKGDRVILLKRVDQNWYEGKIPGTNRQGIFPVSYVEVVKKNTKGAEDYPDPPIPHSYSSDRIHSLSSNKPQRPVFTHENIQGGGEPFQALYNYTPRNEDELELRESDVIDVMEKCDDGWFVGTSRRTKFFGTFPGNYVKRL.

Residues Tyr13, Ser14, His27, Gly28, Ser30, and Ser43 each carry the phosphoserine modification. A compositionally biased stretch (polar residues) spans 30-52 (SLDSTDTYPQHAQSLDGTTSSSI). Residues 30–57 (SLDSTDTYPQHAQSLDGTTSSSIPLYRS) are disordered. The SoHo domain maps to 66–127 (VIKAPHYPGI…YNTPYTYNAG (62 aa)). Residues 134–147 (SAQSHPAAKTQTYR) show a composition bias toward polar residues. The tract at residues 134 to 311 (SAQSHPAAKT…SPSRAKGGDD (178 aa)) is disordered. At His153 the chain carries Alanine amide. Phosphoserine occurs at positions 154 and 157. Residues 167 to 180 (PVPPPHVPPPVPPL) show a composition bias toward pro residues. Positions 181-217 (RPRDRSSTEKHDWDPPDRKVDTRKFRSEPRSIFEYEP) are enriched in basic and acidic residues. 2 positions are modified to phosphothreonine: Ser234 and Ile236. Ser239, Ser245, Ser248, Lys258, Ser259, and Glu260 each carry phosphoserine. Thr277, Gly280, and Val282 each carry phosphothreonine. A Phosphoserine modification is found at Ser287. A compositionally biased stretch (low complexity) spans 287-304 (SSTTLTKSFTSSSPSSPS). Thr292 carries the post-translational modification Phosphothreonine. 10 positions are modified to phosphoserine: Phe295, Ser297, Ser298, Ser299, Ser301, Ser302, Ser304, Ala306, Asp311, and Pro316. Phosphothreonine occurs at positions 320, 322, and 326. Residues His341, Val344, and Arg346 each carry the phosphoserine modification. Position 366 is a phosphothreonine (Glu366). A phosphoserine mark is found at Ser381 and Ser383. A phosphothreonine mark is found at Asp413 and Lys415. Arg437 and Arg439 each carry phosphoserine. Ile459 carries the phosphothreonine modification. A phosphoserine mark is found at Lys474, Ser494, Ser497, Ser550, and Ser750. The interval 807–866 (RMPRSASFQDVDTANSSCHHQDRGGALQDRESPRSYSSTLTDMGRSAPRERRGTPEKEKL) is disordered. Positions 812-824 (ASFQDVDTANSSC) are enriched in polar residues. Residues 825 to 839 (HHQDRGGALQDRESP) show a composition bias toward basic and acidic residues. Ser843 carries the phosphoserine modification. Basic and acidic residues predominate over residues 853–866 (APRERRGTPEKEKL). 2 SH3 domains span residues 863–922 (KEKL…KLTP) and 938–999 (GEIG…VVKK). 2 positions are modified to phosphoserine: Ser1017 and Ser1023. One can recognise an SH3 3 domain in the interval 1041–1100 (GGGEPFQALYNYTPRNEDELELRESDVIDVMEKCDDGWFVGTSRRTKFFGTFPGNYVKRL).

In terms of assembly, interacts with ABL, CBL, DNM1, DNM2, FLOT1, AFDN, PTK2B/PYK2, SAPAP, SPTAN1, SYNJ1, SYNJ2, VCL/vinculin and WASF. Interacts with ABL1/c-Abl, ABL2/v-Abl/Arg, ACTN, CBL and PALLD. Interacts with PTPN12 and WASF1 via its SH3 domains; this interaction may mediate the partial PTPN12 and WASF1 translocation to focal adhesion sites. In terms of processing, ubiquitinated by CBL. Post-translationally, dephosphorylated by PTPN12. As to expression, abundantly expressed in heart. In cardiac muscle cells, located in the Z-disks of sarcomere. Also found, but to a lower extent, in small and large intestine, pancreas, thymus, colon, spleen, prostate, testis, brain, ovary and epithelial cells. In the pancreas, mainly expressed in acinar cells, duct cells and all cell types in islets (at protein level). Tends to be down-regulated in pancreatic adenocarcinomas ans metastases.

It is found in the cytoplasm. It localises to the perinuclear region. The protein localises to the apical cell membrane. The protein resides in the cell junction. Its subcellular location is the focal adhesion. It is found in the cell projection. It localises to the lamellipodium. Its function is as follows. Adapter protein that plays a role in the assembling of signaling complexes, being a link between ABL kinases and actin cytoskeleton. Can form complex with ABL1 and CBL, thus promoting ubiquitination and degradation of ABL1. May play a role in the regulation of pancreatic cell adhesion, possibly by acting on WASF1 phosphorylation, enhancing phosphorylation by ABL1, as well as dephosphorylation by PTPN12. Isoform 6 increases water and sodium absorption in the intestine and gall-bladder. The polypeptide is Sorbin and SH3 domain-containing protein 2 (SORBS2) (Homo sapiens (Human)).